Reading from the N-terminus, the 264-residue chain is NAD-capped RNA hydrolase NudC (264 aa).

Residues cysteine 99 and cysteine 102 each coordinate Zn(2+). Glutamate 112 serves as a coordination point for substrate. Residues cysteine 117 and cysteine 120 each coordinate Zn(2+). Tyrosine 125 provides a ligand contact to substrate. Residues 126-253 (PVICPSIIVA…TIARKLIHAT (128 aa)) enclose the Nudix hydrolase domain. Residues alanine 162, glutamate 178, and glutamate 182 each contribute to the a divalent metal cation site. The Nudix box signature appears at 163 to 184 (GFVEVGETFEQAVQREVFEETG). Position 196–203 (196–203 (QPWAFPNS)) interacts with substrate. Glutamate 223 serves as a coordination point for a divalent metal cation. Residue alanine 246 participates in substrate binding.

The protein belongs to the Nudix hydrolase family. NudC subfamily. In terms of assembly, homodimer. Mg(2+) is required as a cofactor. Requires Mn(2+) as cofactor. Zn(2+) serves as cofactor.

The catalysed reaction is a 5'-end NAD(+)-phospho-ribonucleoside in mRNA + H2O = a 5'-end phospho-adenosine-phospho-ribonucleoside in mRNA + beta-nicotinamide D-ribonucleotide + 2 H(+). It carries out the reaction NAD(+) + H2O = beta-nicotinamide D-ribonucleotide + AMP + 2 H(+). The enzyme catalyses NADH + H2O = reduced beta-nicotinamide D-ribonucleotide + AMP + 2 H(+). MRNA decapping enzyme that specifically removes the nicotinamide adenine dinucleotide (NAD) cap from a subset of mRNAs by hydrolyzing the diphosphate linkage to produce nicotinamide mononucleotide (NMN) and 5' monophosphate mRNA. The NAD-cap is present at the 5'-end of some mRNAs and stabilizes RNA against 5'-processing. Has preference for mRNAs with a 5'-end purine. Catalyzes the hydrolysis of a broad range of dinucleotide pyrophosphates. The polypeptide is NAD-capped RNA hydrolase NudC (Haemophilus influenzae (strain PittGG)).